Consider the following 136-residue polypeptide: Probable acyltransferase SID5 (136 aa).

The protein operates within siderophore biosynthesis. Its function is as follows. Probable acyltransferase; part of the gene cluster that mediates the biosynthesis of hydroxamate-containing siderophores that play a critical role in virulence via intracellular iron acquisition during macrophage infection. The sequence is that of Probable acyltransferase SID5 from Ajellomyces capsulatus (Darling's disease fungus).